The following is a 511-amino-acid chain: DNA nucleotidylexotransferase (511 aa).

Residues 1-26 form a disordered region; sequence MDPLQTAHAGPRKKRPRQTGASMAST. A Nuclear localization signal motif is present at residues 11-17; it reads PRKKRPR. A BRCT domain is found at 27-124; that stretch reads PQDVRFQDLV…KPVETTGKHQ (98 aa). Ser134 carries the phosphoserine modification. A mediates interaction with DNTTIP2 region spans residues 151-511; that stretch reads SQYACQRRTT…DYIEPSERNA (361 aa). The interval 258 to 262 is involved in DNA binding; that stretch reads VGLKT. A 2'-deoxyribonucleoside 5'-triphosphate-binding positions include 333–338 and 342–345; these read GFRRGK and HDVD. 3 residues coordinate Mg(2+): Asp343, Asp345, and Asp435. 450-451 lines the a 2'-deoxyribonucleoside 5'-triphosphate pocket; that stretch reads GW.

The protein belongs to the DNA polymerase type-X family. In terms of assembly, interacts with PRP19 and DNTTIP1. Forms a ternary complex with DNTTIP2 and core histone. Released from this complex by PCNA. Interacts with TRERF1. Mg(2+) is required as a cofactor.

The protein resides in the nucleus. The catalysed reaction is DNA(n) + a 2'-deoxyribonucleoside 5'-triphosphate = DNA(n+1) + diphosphate. Its function is as follows. Template-independent DNA polymerase which catalyzes the random addition of deoxynucleoside 5'-triphosphate to the 3'-end of a DNA initiator. One of the in vivo functions of this enzyme is the addition of nucleotides at the junction (N region) of rearranged Ig heavy chain and T-cell receptor gene segments during the maturation of B- and T-cells. In Eulemur macaco (Black lemur), this protein is DNA nucleotidylexotransferase (DNTT).